We begin with the raw amino-acid sequence, 106 residues long: Thiosulfate sulfurtransferase GlpE (106 aa).

Residues 17 to 105 (SRGEARLVDI…WHRASLPVEA (89 aa)) enclose the Rhodanese domain. The active-site Cysteine persulfide intermediate is cysteine 65.

This sequence belongs to the GlpE family.

The protein resides in the cytoplasm. It catalyses the reaction thiosulfate + hydrogen cyanide = thiocyanate + sulfite + 2 H(+). The catalysed reaction is thiosulfate + [thioredoxin]-dithiol = [thioredoxin]-disulfide + hydrogen sulfide + sulfite + 2 H(+). Transferase that catalyzes the transfer of sulfur from thiosulfate to thiophilic acceptors such as cyanide or dithiols. May function in a CysM-independent thiosulfate assimilation pathway by catalyzing the conversion of thiosulfate to sulfite, which can then be used for L-cysteine biosynthesis. The chain is Thiosulfate sulfurtransferase GlpE from Vibrio vulnificus (strain CMCP6).